Reading from the N-terminus, the 854-residue chain is MADWLLLIPWNKIFTAACGCFFSDRNYIHKMEANLDDLHTTMEELKNGRDDLLRRVSIEEDKGLQQLAQVKGWISRVEIVESRFKDLLEDKSTETGRLCLFGFCSENCISSYNYGEKVMKNLEEVKELLSKKHFEVVAHKIPVPKVEEKNIHTTVGLYAMVEMAWKSLMNDEIRTLCLHGMGGVGKTTLLACINNKFVELESEFDVVIWVVVSKDFQLEGIQDQILGRLRLDKEWERETENKKASLINNNLKRKKFVLLLDDLWSEVDLNKIGVPPPTRENGAKIVFTKRSKEVSKYMKADMQIKVSCLSPDEAWELFRITVDDVILSSHEDIPALARIVAAKCHGLPLALIVIGEAMACKETIQEWHHAINVLNSPAGHKFPGMEERILLVLKFSYDSLKNGEIKLCFLYCSLFPEDFEIEKEKLIEYWICEGYINPNRYEDGGTNQGYDIIGLLVRAHLLIECELTTKVKMHYVIREMALWINSDFGKQQETICVKSGAHVRMIPNDINWEIVRQVSLISTQIEKISCSSKCSNLSTLLLPYNKLVNISVGFFLFMPKLVVLDLSTNMSLIELPEEISNLCSLQYLNLSSTGIKSLPGGMKKLRKLIYLNLEFSYKLESLVGISATLPNLQVLKLFYSNVCVDDILMEELQHMDHLKILTVTIDDAMILERIQGIDRLASSIRGLCLTNMSAPRVVLSTTALGGLQQLAILSCNISEIKMDWKSKERREVSPMEIHPSTSTSSPGFKQLSSVNIMKLVGPRDLSWLLFAQNLKSLHVGFSPEIEEIINKEKGSSITKEIAFGKLESLVIYKLPELKEICWNYRTLPNSRYFDVKDCPKLPEDIANFPMHAEE.

A coiled-coil region spans residues 25–62 (RNYIHKMEANLDDLHTTMEELKNGRDDLLRRVSIEEDK). Residues 138–441 (AHKIPVPKVE…CEGYINPNRY (304 aa)) form the NB-ARC domain. 180-187 (GMGGVGKT) is an ATP binding site. LRR repeat units lie at residues 514–535 (IVRQVSLISTQIEKISCSSKCS), 536–557 (NLSTLLLPYNKLVNISVGFFLF), 560–582 (KLVVLDLSTNMSLIELPEEISNL), 584–605 (SLQYLNLSSTGIKSLPGGMKKL), 607–629 (KLIYLNLEFSYKLESLVGISATL), and 631–652 (NLQVLKLFYSNVCVDDILMEEL).

This sequence belongs to the disease resistance NB-LRR family.

Its function is as follows. Probable disease resistance protein. This Arabidopsis thaliana (Mouse-ear cress) protein is Probable disease resistance protein At1g51480.